A 177-amino-acid polypeptide reads, in one-letter code: tRNA (cytidine(56)-2'-O)-methyltransferase (177 aa).

Residues L84 and 109–113 contribute to the S-adenosyl-L-methionine site; that span reads GAEKV.

The protein belongs to the aTrm56 family. In terms of assembly, homodimer.

It is found in the cytoplasm. It catalyses the reaction cytidine(56) in tRNA + S-adenosyl-L-methionine = 2'-O-methylcytidine(56) in tRNA + S-adenosyl-L-homocysteine + H(+). Its function is as follows. Specifically catalyzes the AdoMet-dependent 2'-O-ribose methylation of cytidine at position 56 in tRNAs. The protein is tRNA (cytidine(56)-2'-O)-methyltransferase of Methanosarcina barkeri (strain Fusaro / DSM 804).